Reading from the N-terminus, the 576-residue chain is Proline--tRNA ligase (576 aa).

This sequence belongs to the class-II aminoacyl-tRNA synthetase family. ProS type 1 subfamily. Homodimer.

Its subcellular location is the cytoplasm. It catalyses the reaction tRNA(Pro) + L-proline + ATP = L-prolyl-tRNA(Pro) + AMP + diphosphate. Catalyzes the attachment of proline to tRNA(Pro) in a two-step reaction: proline is first activated by ATP to form Pro-AMP and then transferred to the acceptor end of tRNA(Pro). As ProRS can inadvertently accommodate and process non-cognate amino acids such as alanine and cysteine, to avoid such errors it has two additional distinct editing activities against alanine. One activity is designated as 'pretransfer' editing and involves the tRNA(Pro)-independent hydrolysis of activated Ala-AMP. The other activity is designated 'posttransfer' editing and involves deacylation of mischarged Ala-tRNA(Pro). The misacylated Cys-tRNA(Pro) is not edited by ProRS. This chain is Proline--tRNA ligase, found in Helicobacter pylori (strain J99 / ATCC 700824) (Campylobacter pylori J99).